The chain runs to 574 residues: Amino-acid acetyltransferase, mitochondrial (574 aa).

The transit peptide at 1–13 (MWRRIFAHGLKYD) directs the protein to the mitochondrion. The region spanning 392-560 (KGAKPSNNSP…KRLREFMRSV (169 aa)) is the N-acetyltransferase domain.

It belongs to the acetyltransferase family. As to quaternary structure, interacts with the acetylglutamate kinase chain of AGR5,6.

Its subcellular location is the mitochondrion. It carries out the reaction L-glutamate + acetyl-CoA = N-acetyl-L-glutamate + CoA + H(+). It functions in the pathway amino-acid biosynthesis; L-arginine biosynthesis; N(2)-acetyl-L-ornithine from L-glutamate: step 1/4. With respect to regulation, feedback inhibition by L-arginine. Functionally, N-acetylglutamate synthase involved in arginine biosynthesis. This is Amino-acid acetyltransferase, mitochondrial (ARG2) from Saccharomyces cerevisiae (strain YJM789) (Baker's yeast).